Reading from the N-terminus, the 319-residue chain is 7-methylguanosine phosphate-specific 5'-nucleotidase (319 aa).

Residue Asp-55 is the Nucleophile of the active site. Residues Asp-55 and Asp-57 each coordinate Mg(2+). Asp-57 (proton donor) is an active-site residue. Glu-103 provides a ligand contact to CMP. Residues Glu-103 and Ser-124 each contribute to the N(7)-methyl-GMP site. Position 171-172 (171-172 (SA)) interacts with substrate. Residue Asp-245 coordinates Mg(2+).

The protein belongs to the pyrimidine 5'-nucleotidase family. As to quaternary structure, monomer. The cofactor is Mg(2+).

The enzyme catalyses N(7)-methyl-GMP + H2O = N(7)-methylguanosine + phosphate. The catalysed reaction is CMP + H2O = cytidine + phosphate. It catalyses the reaction a ribonucleoside 5'-phosphate + H2O = a ribonucleoside + phosphate. With respect to regulation, inhibited by high levels of AMP. Functionally, specifically hydrolyzes 7-methylguanosine monophosphate (m(7)GMP) to 7-methylguanosine and inorganic phosphate. Also able to mediate hydrolysis of diphosphate (m(7)GDP) to 7-methylguanosine and 2 inorganic phosphate with lower activity. The specific activity for m(7)GMP may protect cells against undesired salvage of m(7)GMP and its incorporation into nucleic acids. Also has weak activity for CMP. UMP and purine nucleotides are poor substrates. This Drosophila melanogaster (Fruit fly) protein is 7-methylguanosine phosphate-specific 5'-nucleotidase.